The primary structure comprises 149 residues: Transcriptional regulator MraZ (149 aa).

SpoVT-AbrB domains are found at residues 6–52 (RSHR…PLPD) and 81–124 (AELM…DQGR).

This sequence belongs to the MraZ family. In terms of assembly, forms oligomers.

Its subcellular location is the cytoplasm. It is found in the nucleoid. This chain is Transcriptional regulator MraZ, found in Nitratidesulfovibrio vulgaris (strain DSM 19637 / Miyazaki F) (Desulfovibrio vulgaris).